The primary structure comprises 393 residues: CAI-1 autoinducer synthase (393 aa).

Lys-240 is subject to N6-(pyridoxal phosphate)lysine.

It belongs to the class-II pyridoxal-phosphate-dependent aminotransferase family. Pyridoxal 5'-phosphate is required as a cofactor.

Functionally, required for the synthesis of the quorum-sensing autoinducer CAI-1 ((S)-3-hydroxytridecan-4-one) which probably functions as an intragenus signal. This chain is CAI-1 autoinducer synthase (cqsA), found in Vibrio campbellii (strain ATCC BAA-1116).